The sequence spans 1218 residues: Structural maintenance of chromosomes protein 2 (1218 aa).

32-39 contributes to the ATP binding site; the sequence is GLNGSGKS. The stretch at 209–517 forms a coiled coil; that stretch reads VKLKKEKEEY…INSVKIDYKI (309 aa). Residues 525–654 form the SMC hinge domain; that stretch reads DVLGQIYKLI…CSNVDLCKKI (130 aa). 2 coiled-coil regions span residues 693 to 949 and 978 to 1045; these read LNYE…DTVK and RHDV…KKSE.

It belongs to the SMC family. SMC2 subfamily.

The protein localises to the nucleus. Functionally, may play a role in the conversion of interphase chromatin into condensed chromosomes. This Plasmodium falciparum (isolate 3D7) protein is Structural maintenance of chromosomes protein 2.